The primary structure comprises 340 residues: MAQYKGAASEAGRAMQLMKKREKQREQLEQMKLKIAEENVVKANINKKFSAHYDAVEAELKSSTVGLVTLNDMKAKQEALVKEREKQLAKKEQFKDLQLMLEKQRERERKKEQKRKIASLSFNLEEDEECEDEEGEEEESDKEDPPEEKKKKKKKKLGKNPDVDTSFLPDRDREEEENRLREELRQEWEHKQEKIKSEEIEITFSYWDGSGHRRTVKMKKGNSIQQFLQKALESLRKDFSELRSAGVEQLMYIKEDLIIPHHHSFYDFIVTKARGKSGPLFNFDVHEDVRLLSDATVEKDESHAGKVVLRSWYEKNKHIFPASRWEPYDPEKKWDKYTIR.

2 disordered regions span residues 1–22 (MAQYKGAASEAGRAMQLMKKRE) and 123–178 (NLEE…EEEN). The span at 124 to 146 (LEEDEECEDEEGEEEESDKEDPP) shows a compositional bias: acidic residues. Positions 169–178 (PDRDREEEEN) are enriched in basic and acidic residues.

It is found in the nucleus. Its function is as follows. Probably involved in the regulation of pre-mRNA splicing. The sequence is that of Protein FAM50A-A (fam50a-a) from Xenopus laevis (African clawed frog).